The chain runs to 322 residues: uncharacterized protein (322 aa).

Composition is skewed to basic residues over residues 1–16 and 43–61; these read MPGN…KSGT and LRPH…RRPV. Residues 1–69 are disordered; sequence MPGNSRRRGA…PVKRADETET (69 aa). 3 residues coordinate S-adenosyl-L-methionine: Gly-261, Ile-281, and Leu-290.

Belongs to the class IV-like SAM-binding methyltransferase superfamily. RNA methyltransferase TrmH family.

This is an uncharacterized protein from Mycobacterium tuberculosis (strain CDC 1551 / Oshkosh).